The primary structure comprises 47 residues: Potamin-1 (47 aa).

3 disulfides stabilise this stretch: C3–C40, C6–C24, and C7–C36.

Inhibitor of serine proteases chymotrypsin, papain and trypsin. Has strong antifungal activity against C.albicans and R.solani. Has antibacterial activity against the Gram-positive bacterium C.michiganense, but lacks antibacterial activity against the Gram-positive bacterium S.aureus. Lacks hemolytic activity against human erythrocytes. This is Potamin-1 from Solanum tuberosum (Potato).